The primary structure comprises 396 residues: Methylthioribose kinase (396 aa).

Residues Asn44, Lys61, and 115–117 (EDL) each bind ATP. Position 233 (Asp233) interacts with substrate. 250–252 (DPE) provides a ligand contact to ATP. Arg340 provides a ligand contact to substrate.

This sequence belongs to the methylthioribose kinase family. As to quaternary structure, homodimer.

It catalyses the reaction 5-(methylsulfanyl)-D-ribose + ATP = 5-(methylsulfanyl)-alpha-D-ribose 1-phosphate + ADP + H(+). Its pathway is amino-acid biosynthesis; L-methionine biosynthesis via salvage pathway; S-methyl-5-thio-alpha-D-ribose 1-phosphate from S-methyl-5'-thioadenosine (hydrolase route): step 2/2. Its function is as follows. Catalyzes the phosphorylation of methylthioribose into methylthioribose-1-phosphate. This Geobacillus thermodenitrificans (strain NG80-2) protein is Methylthioribose kinase.